The chain runs to 269 residues: tRNA pseudouridine synthase A (269 aa).

Asp-51 acts as the Nucleophile in catalysis. Tyr-109 contacts substrate.

This sequence belongs to the tRNA pseudouridine synthase TruA family. In terms of assembly, homodimer.

The catalysed reaction is uridine(38/39/40) in tRNA = pseudouridine(38/39/40) in tRNA. In terms of biological role, formation of pseudouridine at positions 38, 39 and 40 in the anticodon stem and loop of transfer RNAs. The protein is tRNA pseudouridine synthase A of Histophilus somni (strain 2336) (Haemophilus somnus).